Reading from the N-terminus, the 1258-residue chain is uncharacterized protein (1258 aa).

The WD 1 repeat unit spans residues 55–93 (ELASEILGVCWQENGVLAAGISEGTWKRFLAGKQAINAE). The segment covering 112–128 (GGRTKERKDTGTSRQEK) has biased composition (basic and acidic residues). A disordered region spans residues 112 to 138 (GGRTKERKDTGTSRQEKFLSSSHPHTD). 14 WD repeats span residues 640–679 (ETLG…LLLI), 682–721 (GHSN…CIKT), 724–763 (GHEH…CLQT), 766–807 (GHTD…RTLK), 809–849 (HTGW…KTYI), 850–889 (GHTN…CIKT), 892–931 (GHTN…CLKA), 934–975 (GNTD…SSLE), 976–1017 (GHTD…QILL), 1019–1059 (HTDW…KTLS), 1060–1101 (EHSD…GILR), 1103–1143 (HSNR…KTLT), 1144–1183 (GHTN…CHHI), and 1186–1227 (GHTH…QILR).

This is an uncharacterized protein from Nostoc sp. (strain PCC 7120 / SAG 25.82 / UTEX 2576).